A 378-amino-acid chain; its full sequence is Deoxyguanosinetriphosphate triphosphohydrolase-like protein (378 aa).

Residues methionine 1–phenylalanine 28 form a disordered region. In terms of domain architecture, HD spans arginine 62–serine 198.

It belongs to the dGTPase family. Type 2 subfamily.

The sequence is that of Deoxyguanosinetriphosphate triphosphohydrolase-like protein from Cereibacter sphaeroides (strain ATCC 17029 / ATH 2.4.9) (Rhodobacter sphaeroides).